The following is a 138-amino-acid chain: MVGSSEAGGEAWRGRYYRLEEVQKHNNSQSTWIIVHHRIYDITKFLDEHPGGEEVLREQAGGDATENFEDVGHSTDARALSETFIIGELHPDDRPKLQKPAETLITTVQSNSSSWSNWVIPAIAAIIVALMYRSYMSE.

A Cytochrome b5 heme-binding domain is found at 14–90 (GRYYRLEEVQ…SETFIIGELH (77 aa)). 2 residues coordinate heme: His-49 and His-73. The helical transmembrane segment at 114 to 136 (SWSNWVIPAIAAIIVALMYRSYM) threads the bilayer.

This sequence belongs to the cytochrome b5 family.

The protein localises to the endoplasmic reticulum membrane. It localises to the microsome membrane. In terms of biological role, cytochrome b5 is a membrane-bound hemoprotein functioning as an electron carrier for several membrane-bound oxygenases. The chain is Cytochrome b5 (CYB5A) from Gallus gallus (Chicken).